The chain runs to 262 residues: Proenkephalin-A-A (262 aa).

A signal peptide spans 1 to 24 (MGLEARHCCMFLLVFASLSVEIRA). 3 disulfides stabilise this stretch: cysteine 26–cysteine 48, cysteine 30–cysteine 52, and cysteine 33–cysteine 65. 5 propeptides span residues 110 to 131 (MDEL…LAKN), 139 to 177 (EYDS…GEIN), 190 to 201 (STDLEDETSGIQ), 211 to 221 (VGRPEWWEDYQ), and 229 to 253 (TRFT…PDME).

It belongs to the opioid neuropeptide precursor family. In terms of processing, the N-terminal domain contains 6 conserved cysteines thought to be involved in disulfide bonding and/or processing.

It localises to the secreted. In terms of biological role, enkephalin neuropeptides compete with and mimic the effects of opiate drugs. They play a role in a number of physiologic functions, including pain perception and responses to stress. The protein is Proenkephalin-A-A (penk-a) of Xenopus laevis (African clawed frog).